The chain runs to 192 residues: Small ribosomal subunit protein uS5 (192 aa).

The 64-residue stretch at 20-83 (FVDKLVHINR…EAAKRGLIRV (64 aa)) folds into the S5 DRBM domain. The tract at residues 162-192 (SVAARRGLKVSALQARRRDADPADTSEAAVA) is disordered.

This sequence belongs to the universal ribosomal protein uS5 family. As to quaternary structure, part of the 30S ribosomal subunit. Contacts proteins S4 and S8.

Its function is as follows. With S4 and S12 plays an important role in translational accuracy. In terms of biological role, located at the back of the 30S subunit body where it stabilizes the conformation of the head with respect to the body. The chain is Small ribosomal subunit protein uS5 from Methylorubrum extorquens (strain CM4 / NCIMB 13688) (Methylobacterium extorquens).